The chain runs to 128 residues: Small ribosomal subunit protein uS9 (128 aa).

Positions 106–128 (SRKVERKKPGRPKARKKFQFSKR) are disordered. The span at 109-128 (VERKKPGRPKARKKFQFSKR) shows a compositional bias: basic residues.

It belongs to the universal ribosomal protein uS9 family.

The polypeptide is Small ribosomal subunit protein uS9 (Azobacteroides pseudotrichonymphae genomovar. CFP2).